We begin with the raw amino-acid sequence, 206 residues long: Large ribosomal subunit protein uL4 (206 aa).

It belongs to the universal ribosomal protein uL4 family. As to quaternary structure, part of the 50S ribosomal subunit.

Functionally, one of the primary rRNA binding proteins, this protein initially binds near the 5'-end of the 23S rRNA. It is important during the early stages of 50S assembly. It makes multiple contacts with different domains of the 23S rRNA in the assembled 50S subunit and ribosome. In terms of biological role, forms part of the polypeptide exit tunnel. The chain is Large ribosomal subunit protein uL4 from Nitratidesulfovibrio vulgaris (strain ATCC 29579 / DSM 644 / CCUG 34227 / NCIMB 8303 / VKM B-1760 / Hildenborough) (Desulfovibrio vulgaris).